We begin with the raw amino-acid sequence, 158 residues long: MNQEKLAKLQAQVRIGGKGTARRKKKVVHRTATADDKKLQSSLKKLVVNNIAGIEEVNMIKDDGTVIHFNNPKVQASLSANTFAITGHAETKQLTEMLPGILSQLGADSLTSLRKLAEQFPRQVLDNKAPKAEDIDEEDDDVPDLVENFDEASKNEAN.

Residues 33-98 (TADDKKLQSS…AETKQLTEML (66 aa)) form the NAC-A/B domain. The segment at 125–158 (LDNKAPKAEDIDEEDDDVPDLVENFDEASKNEAN) is disordered. A compositionally biased stretch (acidic residues) spans 134–150 (DIDEEDDDVPDLVENFD).

This sequence belongs to the NAC-beta family.

The sequence is that of Transcription factor BTF3 homolog 4 (btf3l4) from Danio rerio (Zebrafish).